The following is a 128-amino-acid chain: Large ribosomal subunit protein mL52 (128 aa).

A mitochondrion-targeting transit peptide spans 1-28; that stretch reads MLQIAKLCLATSGRITAQRYVAVTTARA.

It belongs to the mitochondrion-specific ribosomal protein mL52 family. In terms of assembly, component of the mitochondrial ribosome large subunit (39S) which comprises a 16S rRNA and about 50 distinct proteins.

The protein localises to the mitochondrion. This Drosophila pseudoobscura pseudoobscura (Fruit fly) protein is Large ribosomal subunit protein mL52 (mRpL52).